A 318-amino-acid polypeptide reads, in one-letter code: Aspartate carbamoyltransferase catalytic subunit (318 aa).

Carbamoyl phosphate contacts are provided by R59 and T60. K87 lines the L-aspartate pocket. Positions 109, 137, and 140 each coordinate carbamoyl phosphate. 2 residues coordinate L-aspartate: R170 and R224. Residues G265 and P266 each contribute to the carbamoyl phosphate site.

This sequence belongs to the aspartate/ornithine carbamoyltransferase superfamily. ATCase family. As to quaternary structure, heterododecamer (2C3:3R2) of six catalytic PyrB chains organized as two trimers (C3), and six regulatory PyrI chains organized as three dimers (R2).

The catalysed reaction is carbamoyl phosphate + L-aspartate = N-carbamoyl-L-aspartate + phosphate + H(+). It participates in pyrimidine metabolism; UMP biosynthesis via de novo pathway; (S)-dihydroorotate from bicarbonate: step 2/3. Functionally, catalyzes the condensation of carbamoyl phosphate and aspartate to form carbamoyl aspartate and inorganic phosphate, the committed step in the de novo pyrimidine nucleotide biosynthesis pathway. The polypeptide is Aspartate carbamoyltransferase catalytic subunit (Rhizobium etli (strain CIAT 652)).